The chain runs to 477 residues: MNNDKEINSEKSKRAINHFSNKKEIKNSDRRGILFSKLPSQQLNPDRYDNLMTFWNNSLIDISKSCNILIFTPKLLSTYFTVENVSPIYLPLILNEMIKTKFIVKYEEYIKDYGWSKWVWTKMVVQPFQYYTGLSTPNTETEKNVKFILPEMIKDKAEQLYQHQLKNMNSTTDNIISYINLEKSIKDWYITREELDLLLLVLFRDSKVLILTNNKIKNINNNNNGEDRIGIKFAFDGEKVQPIQETDFGILKLQTTYETLKQQESKLLTDIEEISNTIKESIRIKQKNHALLQLKKKKLLESILEKRATASTNIHEILFSIESAKSNQQIIESLCTGVSTLKKVNQEISVDQVDSILDDYQDAITNQREIDDAMKSGFNSVESLSSADIDEDQLEKELDQMLQDHLTLEKEEKQKQKQIEKEKQQQQQPPTSQFNPNLPIPLKNEEDELLKELESLSVTSNPLPKQDENKQKTSELI.

Coiled-coil stretches lie at residues 252 to 280 (KLQTTYETLKQQESKLLTDIEEISNTIKE) and 382 to 428 (ESLS…QQQQ). Composition is skewed to basic and acidic residues over residues 411-424 (EEKQKQKQIEKEKQ) and 465-477 (KQDENKQKTSELI). Positions 411 to 477 (EEKQKQKQIE…ENKQKTSELI (67 aa)) are disordered.

It belongs to the SNF7 family.

It localises to the cytoplasm. In terms of biological role, plays a role in the endosomal sorting pathway. This chain is Charged multivesicular body protein 7 (chmp7), found in Dictyostelium discoideum (Social amoeba).